The chain runs to 286 residues: uncharacterized protein (286 aa).

A helical transmembrane segment spans residues Pro8–Ala28.

This sequence to M.jannaschii MJ1495.

It is found in the membrane. This is an uncharacterized protein from Methanocaldococcus jannaschii (strain ATCC 43067 / DSM 2661 / JAL-1 / JCM 10045 / NBRC 100440) (Methanococcus jannaschii).